Here is a 512-residue protein sequence, read N- to C-terminus: MEELQGYLKKDRSPQQHFLYPLLLQEYIYTLAHDDSLNGSIFYEPIEFIGYDNKFSLVLVKRLIIRMYQQNFLIYLVNDSNQNRFGGHTNYFYSHFFYSQMVSKGFSVIVEIPFSRRLVSSSEEKEIPKSQNLGSIHSIFPFLEDKLSHLNNVSDILIPHPIHFEILVQILQCWIQDVPSLHLLRFFLHKYQNLNKTIQSNKTIYVFSKENKRLFWFLYNSYVSECEFLLVFFHKQSCYLRSTSSGAFLERSHFYGKMEHIIIVCCNNFHKTLWPIKDPLIHYVRYQGKAILASRGNHLLMKEWRYYFVNFWQYYFHFWSQPYRMHINSLLNYSFYFMGYLLRVLINPYAVKNQMLENSFLIDTVIKKFDTIIPIIPLIGSLSKAKFCTFSGHPISKPIWADLSDFDIIDRFGRICRNLSHYYSGSSKKQSLYRIKYILRLSCARTLARKHKSTARALLQRLGLGFLEEFFTEEEQVLSFIFPKTTLFTLHGSHRERIWSLDIIRINDLVNN.

It belongs to the intron maturase 2 family. MatK subfamily.

Its subcellular location is the plastid. The protein resides in the chloroplast. Functionally, usually encoded in the trnK tRNA gene intron. Probably assists in splicing its own and other chloroplast group II introns. The polypeptide is Maturase K (Lilium tsingtauense (Twilight lily)).